The primary structure comprises 124 residues: Large ribosomal subunit protein bL12 (124 aa).

The protein belongs to the bacterial ribosomal protein bL12 family. As to quaternary structure, homodimer. Part of the ribosomal stalk of the 50S ribosomal subunit. Forms a multimeric L10(L12)X complex, where L10 forms an elongated spine to which 2 to 4 L12 dimers bind in a sequential fashion. Binds GTP-bound translation factors.

Forms part of the ribosomal stalk which helps the ribosome interact with GTP-bound translation factors. Is thus essential for accurate translation. The protein is Large ribosomal subunit protein bL12 of Borreliella afzelii (strain PKo) (Borrelia afzelii).